Reading from the N-terminus, the 960-residue chain is Anoctamin-1 (960 aa).

Residues 1–333 (MRVPEKYSTL…FGEKVGLYFA (333 aa)) lie on the Cytoplasmic side of the membrane. The segment at 92-115 (TRSVRQDQPLPGKGSPVDAGSPEV) is disordered. At serine 196 the chain carries Phosphoserine. The helical transmembrane segment at 334–354 (WLGAYTQMLIPASIVGVIVFL) threads the bilayer. Residues 355–406 (YGCATVDENIPSMEMCDQRYNITMCPLCDKTCSYWKMSSACATARASHLFDN) lie on the Extracellular side of the membrane. Cystine bridges form between cysteine 370–cysteine 395, cysteine 379–cysteine 836, cysteine 382–cysteine 386, and cysteine 625–cysteine 630. A helical membrane pass occupies residues 407-427 (PATVFFSVFMALWAATFMEHW). Residue glutamate 425 participates in Ca(2+) binding. The Cytoplasmic segment spans residues 428-493 (KRKQMRLNYR…RDRFPAYFTN (66 aa)). Residues 494 to 514 (LVSIIFMIAVTFAIVLGVIIY) traverse the membrane as a helical segment. Topologically, residues 515–542 (RISTAAALAMNSSPSVRSNIRVTVTATA) are extracellular. The chain crosses the membrane as a helical span at residues 543–563 (VIINLVVIILLDEVYGCIARW). The Cytoplasmic portion of the chain corresponds to 564–581 (LTKIEVPKTEKSFEERLT). The chain crosses the membrane as a helical span at residues 582–602 (FKAFLLKFVNSYTPIFYVAFF). Over 603 to 631 (KGRFVGRPGDYVYIFRSFRMEECAPGGCL) the chain is Extracellular. A helical transmembrane segment spans residues 632–652 (MELCIQLSIIMLGKQLIQNNL). Ca(2+) contacts are provided by asparagine 651, glutamate 654, glutamate 702, glutamate 705, glutamate 734, and aspartate 738. The Cytoplasmic portion of the chain corresponds to 653-699 (FEIGIPKMKKFIRYLKLRRQSPSDREEYVKRKQRYEVDFNLEPFAGL). 2 helical membrane passes run 700 to 720 (TPEY…VASF) and 721 to 741 (PLAP…DAKK). Residues 742–758 (FVTELRRPVAIRAKDIG) lie on the Cytoplasmic side of the membrane. A helical transmembrane segment spans residues 759–779 (IWYNILRGVGKLAVIINAFVI). At 780–866 (SFTSDFIPRL…FWAVLAARLA (87 aa)) the chain is on the extracellular side. Asparagine 806 carries N-linked (GlcNAc...) asparagine glycosylation. A helical transmembrane segment spans residues 867 to 887 (FVIVFQNLVMFMSDFVDWVIP). Ca(2+) contacts are provided by aspartate 883 and aspartate 888. Topologically, residues 888-960 (DIPKDISQQI…PSYEYHGDAL (73 aa)) are cytoplasmic. A disordered region spans residues 928-960 (PRDVPCNNHSPTTHPEAGDGSPVPSYEYHGDAL).

This sequence belongs to the anoctamin family. In terms of assembly, homodimer. Interacts with CFTR. Interacts with TRPV4. As to expression, expressed at the apical surface of the vomeronasal epithelium (at protein level). Expressed in the lateral and septal nasal glands (at protein level). Highly expressed in pulmonary bronchiole epithelial cells, pancreatic and submandibular gland acinar cells, kidney proximal tubule, all retinal cell layers, most sensory cells of dorsal root ganglia, Leydig cells and spermatocytes (at protein level). In the dorsal root ganglia, detected in small-diameter nociceptive neurons and in larger myelinated neurons (at protein level). In the dorsal root ganglia, expressed in MrgprA3-positive neurons (at protein level). In the developing brain, highly expressed in the ventricular zone and subventricular zone at 12.5 dpc and 14.5 dpc where it is detected in radial glial cells but not in neurons with expression dramatically decreased at P1 (at protein level). Highly expressed in the endometrial stroma (at protein level). In taste buds of the vallate papillae, expressed in the apical region of type I taste cells (at protein level). In the kidney, expressed in the collecting duct (at protein level). In the retina, strongly expressed in the outer and inner plexiform layers, weakly expressed in some somata in the inner nuclear layer and ganglion cell layer and not expressed in the outer nuclear layer (at protein level). Expressed in various retinal neurons including rod bipolar cells (at protein level). Expressed in eye, brain, myometrium and endometrium with higher levels in endometrium than myometrium in estrus and day 18 pregnant mice. Not detected in uterine smooth muscle cells. Expressed at high levels in the thyroid gland and gastrointestinal muscles.

It localises to the apical cell membrane. The protein resides in the presynapse. The enzyme catalyses chloride(in) = chloride(out). With respect to regulation, ATP and calmodulin are essential for its activation. Channel activity is inhibited by CFTR protein and by chloride inhibitors such as niflumic acid (NFA) and 4,4'-diisothiocyanatostilbene-2,2'-disulfonic acid (DIDS). Activated by heat with activation seen at temperatures above 44 degrees Celsius. Activated by BDNF in radial glial cells. In terms of biological role, calcium-activated chloride channel (CaCC). Plays a role in transepithelial anion transport and smooth muscle contraction. Required for the normal functioning of the interstitial cells of Cajal (ICCs) which generate electrical pacemaker activity in gastrointestinal smooth muscles. Acts as a major contributor to basal and stimulated chloride conductance in airway epithelial cells and plays an important role in tracheal cartilage development. Required for CFTR activation by enhancing endoplasmic reticulum Ca(2+) store release and is also required for CFTR membrane expression. Required for basal and ATP-dependent mucus secretion in airways and intestine, probably by controlling exocytosis of mucus-filled granules by providing Ca(2+) to an apical signaling compartment. Contributes to airway mucus expression induced by interleukins IL3 and IL8 and by the asthma-associated protein CLCA1 and is required for expression of mucin MUC5AC. However, was shown in another study not to be required for MUC5AC expression. Plays a role in the propagation of Ca(2+) waves in Kolliker's organ in the cochlea and contributes to the refinement of auditory brainstem circuitries prior to hearing onset. In vomeronasal sensory neurons, modulates spontaneous firing patterns in the absence of stimuli as well as the firing pattern of pheromone-evoked activity. Responsible for calcium-activated chloride channel activity in type I taste cells of the vallate papillae. Acts as a heat sensor in nociceptive neurons. In dorsal root ganglion neurons, plays a role in mediating non-histaminergic Mas-related G-protein coupled receptor (MRGPR)-dependent itching, acting as a downstream effector of MRGPRs. In the developing brain, required for the Ca(2+)-dependent process extension of radial glial cells. The chain is Anoctamin-1 (Ano1) from Mus musculus (Mouse).